We begin with the raw amino-acid sequence, 223 residues long: Cytidine deaminase 3 (223 aa).

CMP/dCMP-type deaminase domains follow at residues 21–154 and 184–223; these read TEPM…FSPD and SDCS…WYRG. 62 to 64 contributes to the substrate binding site; that stretch reads NVE. Residue His75 coordinates Zn(2+). The active-site Proton donor is the Glu77. Zn(2+) contacts are provided by Cys110 and Cys113.

This sequence belongs to the cytidine and deoxycytidylate deaminase family. As to quaternary structure, homodimer. The cofactor is Zn(2+).

It carries out the reaction cytidine + H2O + H(+) = uridine + NH4(+). It catalyses the reaction 2'-deoxycytidine + H2O + H(+) = 2'-deoxyuridine + NH4(+). This enzyme scavenges exogenous and endogenous cytidine and 2'-deoxycytidine for UMP synthesis. The polypeptide is Cytidine deaminase 3 (CDA3) (Arabidopsis thaliana (Mouse-ear cress)).